We begin with the raw amino-acid sequence, 464 residues long: tRNA modification GTPase MnmE (464 aa).

(6S)-5-formyl-5,6,7,8-tetrahydrofolate is bound by residues Arg25, Glu87, and Lys130. Residues 226–386 (GLSVVLAGQP…LRAELLRIAG (161 aa)) form the TrmE-type G domain. Asn236 contributes to the K(+) binding site. GTP contacts are provided by residues 236 to 241 (NVGKSS), 255 to 261 (TPIAGTT), and 280 to 283 (DTAG). Ser240 serves as a coordination point for Mg(2+). 3 residues coordinate K(+): Thr255, Ile257, and Thr260. Residue Thr261 coordinates Mg(2+). (6S)-5-formyl-5,6,7,8-tetrahydrofolate is bound at residue Lys464.

Belongs to the TRAFAC class TrmE-Era-EngA-EngB-Septin-like GTPase superfamily. TrmE GTPase family. As to quaternary structure, homodimer. Heterotetramer of two MnmE and two MnmG subunits. K(+) serves as cofactor.

The protein resides in the cytoplasm. Its function is as follows. Exhibits a very high intrinsic GTPase hydrolysis rate. Involved in the addition of a carboxymethylaminomethyl (cmnm) group at the wobble position (U34) of certain tRNAs, forming tRNA-cmnm(5)s(2)U34. The sequence is that of tRNA modification GTPase MnmE from Burkholderia lata (strain ATCC 17760 / DSM 23089 / LMG 22485 / NCIMB 9086 / R18194 / 383).